Here is a 138-residue protein sequence, read N- to C-terminus: Putative pre-16S rRNA nuclease (138 aa).

The protein belongs to the YqgF nuclease family.

The protein localises to the cytoplasm. Its function is as follows. Could be a nuclease involved in processing of the 5'-end of pre-16S rRNA. This chain is Putative pre-16S rRNA nuclease, found in Caldicellulosiruptor saccharolyticus (strain ATCC 43494 / DSM 8903 / Tp8T 6331).